The primary structure comprises 179 residues: Large ribosomal subunit protein uL6 (179 aa).

Belongs to the universal ribosomal protein uL6 family. In terms of assembly, part of the 50S ribosomal subunit.

In terms of biological role, this protein binds to the 23S rRNA, and is important in its secondary structure. It is located near the subunit interface in the base of the L7/L12 stalk, and near the tRNA binding site of the peptidyltransferase center. This chain is Large ribosomal subunit protein uL6, found in Gemmatimonas aurantiaca (strain DSM 14586 / JCM 11422 / NBRC 100505 / T-27).